The following is a 194-amino-acid chain: Imidazoleglycerol-phosphate dehydratase (194 aa).

It belongs to the imidazoleglycerol-phosphate dehydratase family.

It is found in the cytoplasm. It carries out the reaction D-erythro-1-(imidazol-4-yl)glycerol 3-phosphate = 3-(imidazol-4-yl)-2-oxopropyl phosphate + H2O. The protein operates within amino-acid biosynthesis; L-histidine biosynthesis; L-histidine from 5-phospho-alpha-D-ribose 1-diphosphate: step 6/9. This is Imidazoleglycerol-phosphate dehydratase from Methanothermobacter thermautotrophicus (strain ATCC 29096 / DSM 1053 / JCM 10044 / NBRC 100330 / Delta H) (Methanobacterium thermoautotrophicum).